A 101-amino-acid chain; its full sequence is uncharacterized protein (101 aa).

The protein resides in the mitochondrion. This is an uncharacterized protein from Arabidopsis thaliana (Mouse-ear cress).